The chain runs to 407 residues: Imidazolonepropionase (407 aa).

Fe(3+) contacts are provided by histidine 74 and histidine 76. Residues histidine 74 and histidine 76 each coordinate Zn(2+). The 4-imidazolone-5-propanoate site is built by arginine 83, tyrosine 146, and histidine 179. Residue tyrosine 146 participates in N-formimidoyl-L-glutamate binding. Histidine 244 contributes to the Fe(3+) binding site. A Zn(2+)-binding site is contributed by histidine 244. Residue glutamine 247 participates in 4-imidazolone-5-propanoate binding. Aspartate 319 contributes to the Fe(3+) binding site. Residue aspartate 319 coordinates Zn(2+). Residues asparagine 321 and glycine 323 each coordinate N-formimidoyl-L-glutamate. Threonine 324 is a 4-imidazolone-5-propanoate binding site.

It belongs to the metallo-dependent hydrolases superfamily. HutI family. It depends on Zn(2+) as a cofactor. Requires Fe(3+) as cofactor.

It localises to the cytoplasm. The enzyme catalyses 4-imidazolone-5-propanoate + H2O = N-formimidoyl-L-glutamate. It functions in the pathway amino-acid degradation; L-histidine degradation into L-glutamate; N-formimidoyl-L-glutamate from L-histidine: step 3/3. Catalyzes the hydrolytic cleavage of the carbon-nitrogen bond in imidazolone-5-propanoate to yield N-formimidoyl-L-glutamate. It is the third step in the universal histidine degradation pathway. This is Imidazolonepropionase from Salmonella typhimurium (strain LT2 / SGSC1412 / ATCC 700720).